The chain runs to 450 residues: Molybdate-anion transporter (450 aa).

12 helical membrane passes run 1 to 21, 43 to 63, 79 to 99, 128 to 148, 174 to 194, 195 to 215, 249 to 269, 278 to 298, 311 to 331, 344 to 364, 376 to 396, and 409 to 429; these read MLVT…GLEL, LDFY…APYL, ILYV…SSLV, FVLL…FSAF, AAFW…AVAS, WIGL…ALAG, VLLL…FVFL, GAPL…GSSL, PMHL…MLTF, FIAF…MSFL, GVLN…LLVL, and FSIC…LFTV.

This sequence belongs to the major facilitator superfamily. In terms of tissue distribution, expressed ubiquitously but at relatively higher levels in the olfactory bulb and the skeletal muscle.

Its subcellular location is the cell membrane. Its function is as follows. Mediates high-affinity intracellular uptake of the rare oligo-element molybdenum. The protein is Molybdate-anion transporter (MFSD5) of Homo sapiens (Human).